The chain runs to 115 residues: T cell receptor beta variable 18 (115 aa).

The first 21 residues, 1–21, serve as a signal peptide directing secretion; sequence MDTRLLCCAVICLLGAGLSNA. The Ig-like domain occupies 22–115; the sequence is GVMQNPRHLV…SAAYFCASSP (94 aa). Residues C42 and C111 are joined by a disulfide bond.

In terms of assembly, alpha-beta TR is a heterodimer composed of an alpha and beta chain; disulfide-linked. The alpha-beta TR is associated with the transmembrane signaling CD3 coreceptor proteins to form the TR-CD3 (TcR or TCR). The assembly of alpha-beta TR heterodimers with CD3 occurs in the endoplasmic reticulum where a single alpha-beta TR heterodimer associates with one CD3D-CD3E heterodimer, one CD3G-CD3E heterodimer and one CD247 homodimer forming a stable octameric structure. CD3D-CD3E and CD3G-CD3E heterodimers preferentially associate with TR alpha and TR beta chains, respectively. The association of the CD247 homodimer is the last step of TcR assembly in the endoplasmic reticulum and is required for transport to the cell surface.

The protein resides in the cell membrane. Functionally, v region of the variable domain of T cell receptor (TR) beta chain that participates in the antigen recognition. Alpha-beta T cell receptors are antigen specific receptors which are essential to the immune response and are present on the cell surface of T lymphocytes. Recognize peptide-major histocompatibility (MH) (pMH) complexes that are displayed by antigen presenting cells (APC), a prerequisite for efficient T cell adaptive immunity against pathogens. Binding of alpha-beta TR to pMH complex initiates TR-CD3 clustering on the cell surface and intracellular activation of LCK that phosphorylates the ITAM motifs of CD3G, CD3D, CD3E and CD247 enabling the recruitment of ZAP70. In turn ZAP70 phosphorylates LAT, which recruits numerous signaling molecules to form the LAT signalosome. The LAT signalosome propagates signal branching to three major signaling pathways, the calcium, the mitogen-activated protein kinase (MAPK) kinase and the nuclear factor NF-kappa-B (NF-kB) pathways, leading to the mobilization of transcription factors that are critical for gene expression and essential for T cell growth and differentiation. The T cell repertoire is generated in the thymus, by V-(D)-J rearrangement. This repertoire is then shaped by intrathymic selection events to generate a peripheral T cell pool of self-MH restricted, non-autoaggressive T cells. Post-thymic interaction of alpha-beta TR with the pMH complexes shapes TR structural and functional avidity. This is T cell receptor beta variable 18 from Homo sapiens (Human).